We begin with the raw amino-acid sequence, 326 residues long: Type II methyltransferase M.CviAII (326 aa).

It belongs to the N(4)/N(6)-methyltransferase family.

The enzyme catalyses a 2'-deoxyadenosine in DNA + S-adenosyl-L-methionine = an N(6)-methyl-2'-deoxyadenosine in DNA + S-adenosyl-L-homocysteine + H(+). Its function is as follows. An alpha subtype methylase that recognizes the double-stranded sequence 5'-CATG-3', methylates A-2 on both strands and protects the DNA from cleavage by the CviAII endonuclease. The protein is Type II methyltransferase M.CviAII (CVIAIIM) of Paramecium bursaria Chlorella virus 1 (PBCV-1).